The following is a 287-amino-acid chain: Nucleotide-binding protein Sfri_3380 (287 aa).

Residue 8 to 15 (GRSGSGKS) participates in ATP binding. 56-59 (DVRN) serves as a coordination point for GTP.

This sequence belongs to the RapZ-like family.

Its function is as follows. Displays ATPase and GTPase activities. This chain is Nucleotide-binding protein Sfri_3380, found in Shewanella frigidimarina (strain NCIMB 400).